The chain runs to 343 residues: Heat-inducible transcription repressor HrcA (343 aa).

It belongs to the HrcA family.

Functionally, negative regulator of class I heat shock genes (grpE-dnaK-dnaJ and groELS operons). Prevents heat-shock induction of these operons. The sequence is that of Heat-inducible transcription repressor HrcA from Phytoplasma mali (strain AT).